The sequence spans 171 residues: UPF0398 protein SEQ_1788 (171 aa).

This sequence belongs to the UPF0398 family.

The polypeptide is UPF0398 protein SEQ_1788 (Streptococcus equi subsp. equi (strain 4047)).